The primary structure comprises 294 residues: Pyridoxal 5'-phosphate synthase subunit PdxS (294 aa).

Asp-24 provides a ligand contact to D-ribose 5-phosphate. The Schiff-base intermediate with D-ribose 5-phosphate role is filled by Lys-81. Residue Gly-153 participates in D-ribose 5-phosphate binding. Arg-165 lines the D-glyceraldehyde 3-phosphate pocket. D-ribose 5-phosphate is bound by residues Gly-214 and 235-236; that span reads GS.

It belongs to the PdxS/SNZ family. In terms of assembly, in the presence of PdxT, forms a dodecamer of heterodimers.

It catalyses the reaction aldehydo-D-ribose 5-phosphate + D-glyceraldehyde 3-phosphate + L-glutamine = pyridoxal 5'-phosphate + L-glutamate + phosphate + 3 H2O + H(+). Its pathway is cofactor biosynthesis; pyridoxal 5'-phosphate biosynthesis. Catalyzes the formation of pyridoxal 5'-phosphate from ribose 5-phosphate (RBP), glyceraldehyde 3-phosphate (G3P) and ammonia. The ammonia is provided by the PdxT subunit. Can also use ribulose 5-phosphate and dihydroxyacetone phosphate as substrates, resulting from enzyme-catalyzed isomerization of RBP and G3P, respectively. This chain is Pyridoxal 5'-phosphate synthase subunit PdxS, found in Bacillus licheniformis (strain ATCC 14580 / DSM 13 / JCM 2505 / CCUG 7422 / NBRC 12200 / NCIMB 9375 / NCTC 10341 / NRRL NRS-1264 / Gibson 46).